The chain runs to 653 residues: Serine/threonine-protein phosphatase with EF-hands 1 (653 aa).

An IQ domain is found at 16–45 (SLRAALIIQNWYRGYKARLKARQHYALTIF). The interval 121 to 455 (IDLLLEAFKE…PRFFQYQVTK (335 aa)) is catalytic. Mn(2+) contacts are provided by aspartate 172, histidine 174, aspartate 201, and asparagine 233. Histidine 234 serves as the catalytic Proton donor. Histidine 285 and histidine 403 together coordinate Mn(2+). EF-hand domains lie at 483–518 (SRKS…ILGL), 566–601 (RYRS…FSSH), and 606–641 (IDDS…VHRY). Ca(2+)-binding residues include aspartate 579, aspartate 581, serine 583, glutamate 590, aspartate 619, asparagine 621, aspartate 623, serine 625, and glutamate 630.

It belongs to the PPP phosphatase family. The cofactor is Mn(2+). Mg(2+) is required as a cofactor. As to expression, detected in retina and retinal derived Y-79 retinoblastoma cells. Also found in fetal brain.

It catalyses the reaction O-phospho-L-seryl-[protein] + H2O = L-seryl-[protein] + phosphate. The enzyme catalyses O-phospho-L-threonyl-[protein] + H2O = L-threonyl-[protein] + phosphate. Activated by calcium. May have a role in the recovery or adaptation response of photoreceptors. May have a role in development. The sequence is that of Serine/threonine-protein phosphatase with EF-hands 1 (PPEF1) from Homo sapiens (Human).